The following is a 357-amino-acid chain: 3-isopropylmalate dehydrogenase (357 aa).

Residue 76 to 89 (GPQWDTIDPSLRPE) participates in NAD(+) binding. Substrate contacts are provided by arginine 96, arginine 106, arginine 134, and aspartate 224. Mg(2+) is bound by residues aspartate 224, aspartate 248, and aspartate 252. Residue 282–294 (GSAPDIAGKGIAN) coordinates NAD(+).

Belongs to the isocitrate and isopropylmalate dehydrogenases family. LeuB type 1 subfamily. In terms of assembly, homodimer. Mg(2+) serves as cofactor. Mn(2+) is required as a cofactor.

It localises to the cytoplasm. It carries out the reaction (2R,3S)-3-isopropylmalate + NAD(+) = 4-methyl-2-oxopentanoate + CO2 + NADH. It participates in amino-acid biosynthesis; L-leucine biosynthesis; L-leucine from 3-methyl-2-oxobutanoate: step 3/4. Catalyzes the oxidation of 3-carboxy-2-hydroxy-4-methylpentanoate (3-isopropylmalate) to 3-carboxy-4-methyl-2-oxopentanoate. The product decarboxylates to 4-methyl-2 oxopentanoate. This chain is 3-isopropylmalate dehydrogenase, found in Xanthomonas oryzae pv. oryzae (strain MAFF 311018).